The chain runs to 1792 residues: Non-reducing polyketide synthase aptA (1792 aa).

The tract at residues 1–395 (MKDNTHSTTL…PRSFAHSKLA (395 aa)) is N-terminal acylcarrier protein transacylase domain (SAT). The 434-residue stretch at 391–824 (HSKLAVVGMA…GGNTTVLLED (434 aa)) folds into the Ketosynthase family 3 (KS3) domain. Active-site for beta-ketoacyl synthase activity residues include Cys564, His699, and His742. The interval 926 to 1243 (VFAFTGQGAF…NLVALHLAGC (318 aa)) is malonyl-CoA:ACP transacylase (MAT) domain. Residues 1308–1625 (TSLIHEIIEE…PRLLMDRFFS (318 aa)) form a product template (PT) domain region. The N-terminal hotdog fold stretch occupies residues 1312–1447 (HEIIEETIGE…GSVRFEADAE (136 aa)). Positions 1312-1621 (HEIIEETIGE…FRRVPRLLMD (310 aa)) constitute a PKS/mFAS DH domain. His1344 acts as the Proton acceptor; for dehydratase activity in catalysis. The interval 1475 to 1621 (QASQLSKALS…FRRVPRLLMD (147 aa)) is C-terminal hotdog fold. Catalysis depends on Asp1533, which acts as the Proton donor; for dehydratase activity. Low complexity predominate over residues 1634-1649 (VAASASSAPKTATKHA). Positions 1634–1716 (VAASASSAPK…GPNGTTSQPE (83 aa)) are disordered. Positions 1664–1684 (TPSSLPTVQAQNTSPPQQVTP) are enriched in polar residues. Residues 1694–1705 (TPEEEKPGKADA) are compositionally biased toward basic and acidic residues. The Carrier domain maps to 1715–1792 (PEATGVVGQC…DMMDWLEQYC (78 aa)). Residue Ser1752 is modified to O-(pantetheine 4'-phosphoryl)serine.

It depends on pantetheine 4'-phosphate as a cofactor.

The catalysed reaction is holo-[ACP] + 8 malonyl-CoA + acetyl-CoA + 8 H(+) = 3,6,8,9-tetrahydroxy-1-oxo-3-(2-oxopropyl)-1,2,3,4-tetrahydroanthracene-2-carboxyl-[ACP] + 8 CO2 + 9 CoA + 2 H2O. It functions in the pathway secondary metabolite biosynthesis. In terms of biological role, non-reducing polyketide synthase (NRPKS); part of the gene cluster that mediates the biosynthesis of asperthecin, an anthraquinone pigment. Catalyzes the formation of the aromatic polyketide from acetyl coenzyme A and seven malonyl coenzyme A molecules. Through its product template (PT) domain, catalyzes the cyclization of the polyketide backbone via C6-C11 aldolcondensation. Polyketide is subsequently hydrolyzed from the NRPKS by the action of the hydrolase aptB into endocrocin-9-anthrone. Endocrocin-9-anthrone is then oxidized into endocrocin by aptC. Endocrocin is likely to decarboxylate spontaneously to form emodin which explains why there is no decarboxylase in the asperthecin biosynthesis cluster. Finally, aptC or another endogenous oxygenase catalyzes additional oxidation steps to form asperthecin. This Emericella nidulans (strain FGSC A4 / ATCC 38163 / CBS 112.46 / NRRL 194 / M139) (Aspergillus nidulans) protein is Non-reducing polyketide synthase aptA.